We begin with the raw amino-acid sequence, 2339 residues long: MVRFGDELGGRYGGPGGGERARGGGAGGAGGPGPGGLQPGQRVLYKQSIAQRARTMALYNPIPVKQNCFTVNRSLFVFSEDNVVRKYAKRITEWPPFEYMILATIIANCIVLALEQHLPDGDKTPMSERLDDTEPYFIGIFCFEAGIKIIALGFVFHKGSYLRNGWNVMDFVVVLTGILATAGTDFDLRTLRAVRVLRPLKLVSGIPSLQVVLKSIMKAMVPLLQIGLLLFFAILMFAIIGLEFYMGKFHKACFPNSTDAEPVGDFPCGKEAPARLCEGDTECREYWPGPNFGITNFDNILFAILTVFQCITMEGWTDILYNTNDAAGNTWNWLYFIPLIIIGSFFMLNLVLGVLSGEFAKERERVENRRAFLKLRRQQQIERELNGYLEWIFKAEEVMLAEEDRNAEEKSPLDVLKRAATKKSRNDLIHAEEGEDRFADLCAVGSPFARASLKSGKTESSSYFRRKEKMFRFFIRRMVKAQSFYWVVLCVVALNTLCVAMVHYNQPRRLTTTLYFAEFVFLGLFLTEMSLKMYGLGPRSYFRSSFNCFDFGVIVGSVFEVVWAAIKPGSSFGISVLRALRLLRIFKVTKYWSSLRNLVVSLLNSMKSIISLLFLLFLFIVVFALLGMQLFGGQFNFQDETPTTNFDTFPAAILTVFQILTGEDWNAVMYHGIESQGGVSKGMFSSFYFIVLTLFGNYTLLNVFLAIAVDNLANAQELTKDEEEMEEAANQKLALQKAKEVAEVSPMSAANISIAARQQNSAKARSVWEQRASQLRLQNLRASCEALYSEMDPEERLRFATTRHLRPDMKTHLDRPLVVELGRDGARGPVGGKARPEAAEAPEGVDPPRRHHRHRDKDKTPAAGDQDRAEAPKAESGEPGAREERPRPHRSHSKEAAGPPEARSERGRGPGPEGGRRHHRRGSPEEAAEREPRRHRAHRHQDPSKECAGAKGERRARHRGGPRAGPREAESGEEPARRHRARHKAQPAHEAVEKETTEKEATEKEAEIVEADKEKELRNHQPREPHCDLETSGTVTVGPMHTLPSTCLQKVEEQPEDADNQRNVTRMGSQPPDPNTIVHIPVMLTGPLGEATVVPSGNVDLESQAEGKKEVEADDVMRSGPRPIVPYSSMFCLSPTNLLRRFCHYIVTMRYFEVVILVVIALSSIALAAEDPVRTDSPRNNALKYLDYIFTGVFTFEMVIKMIDLGLLLHPGAYFRDLWNILDFIVVSGALVAFAFSGSKGKDINTIKSLRVLRVLRPLKTIKRLPKLKAVFDCVVNSLKNVLNILIVYMLFMFIFAVIAVQLFKGKFFYCTDESKELERDCRGQYLDYEKEEVEAQPRQWKKYDFHYDNVLWALLTLFTVSTGEGWPMVLKHSVDATYEEQGPSPGYRMELSIFYVVYFVVFPFFFVNIFVALIIITFQEQGDKVMSECSLEKNERACIDFAISAKPLTRYMPQNRQSFQYKTWTFVVSPPFEYFIMAMIALNTVVLMMKFYDAPYEYELMLKCLNIVFTSMFSMECVLKIIAFGVLNYFRDAWNVFDFVTVLGSITDILVTEIAETNNFINLSFLRLFRAARLIKLLRQGYTIRILLWTFVQSFKALPYVCLLIAMLFFIYAIIGMQVFGNIALDDDTSINRHNNFRTFLQALMLLFRSATGEAWHEIMLSCLSNQACDEQANATECGSDFAYFYFVSFIFLCSFLMLNLFVAVIMDNFEYLTRDSSILGPHHLDEFIRVWAEYDPAACGRISYNDMFEMLKHMSPPLGLGKKCPARVAYKRLVRMNMPISNEDMTVHFTSTLMALIRTALEIKLAPAGTKQHQCDAELRKEISVVWANLPQKTLDLLVPPHKPDEMTVGKVYAALMIFDFYKQNKTTRDQMQQAPGGLSQMGPVSLFHPLKATLEQTQPAVLRGARVFLRQKSSTSLSNGGAIQNQESGIKESVSWGTQRTQDAPHEARPPLERGHSTEIPVGRSGALAVDVQMQSITRRGPDGEPQPGLESQGRAASMPRLAAETQPVTDASPMKRSISTLAQRPRGTHLCSTTPDRPPPSQASSHHHHHRCHRRRDRKQRSLEKGPSLSADMDGAPSSAVGPGLPPGEGPTGCRRERERRQERGRSQERRQPSSSSSEKQRFYSCDRFGGREPPKPKPSLSSHPTSPTAGQEPGPHPQGSGSVNGSPLLSTSGASTPGRGGRRQLPQTPLTPRPSITYKTANSSPIHFAGAQTSLPAFSPGRLSRGLSEHNALLQRDPLSQPLAPGSRIGSDPYLGQRLDSEASVHALPEDTLTFEEAVATNSGRSSRTSYVSSLTSQSHPLRRVPNGYHCTLGLSSGGRARHSYHHPDQDHWC.

Residues 1–37 (MVRFGDELGGRYGGPGGGERARGGGAGGAGGPGPGGL) form a disordered region. At 1-90 (MVRFGDELGG…DNVVRKYAKR (90 aa)) the chain is on the cytoplasmic side. A compositionally biased stretch (gly residues) spans 10–37 (GRYGGPGGGERARGGGAGGAGGPGPGGL). Arg22 carries the post-translational modification Omega-N-methylarginine. The stretch at 82–359 (NVVRKYAKRI…LVLGVLSGEF (278 aa)) is one I repeat. The chain crosses the membrane as a helical span at residues 91–114 (ITEWPPFEYMILATIIANCIVLAL). Topologically, residues 115–131 (EQHLPDGDKTPMSERLD) are extracellular. The helical transmembrane segment at 132-152 (DTEPYFIGIFCFEAGIKIIAL) threads the bilayer. Topologically, residues 153-163 (GFVFHKGSYLR) are cytoplasmic. Residues 164–182 (NGWNVMDFVVVLTGILATA) traverse the membrane as a helical segment. Residues 183-187 (GTDFD) are Extracellular-facing. Residues 188-211 (LRTLRAVRVLRPLKLVSGIPSLQV) form a helical membrane-spanning segment. Over 212–221 (VLKSIMKAMV) the chain is Cytoplasmic. A helical transmembrane segment spans residues 222 to 244 (PLLQIGLLLFFAILMFAIIGLEF). At 245-331 (YMGKFHKACF…NTNDAAGNTW (87 aa)) the chain is on the extracellular side. A glycan (N-linked (GlcNAc...) asparagine) is linked at Asn256. A helical membrane pass occupies residues 332-356 (NWLYFIPLIIIGSFFMLNLVLGVLS). Residues 357–482 (GEFAKERERV…FFIRRMVKAQ (126 aa)) lie on the Cytoplasmic side of the membrane. The binding to the beta subunit stretch occupies residues 379–396 (QQIERELNGYLEWIFKAE). Ser411 carries the post-translational modification Phosphoserine. 451 to 458 (ASLKSGKT) is a binding site for ATP. The stretch at 468–712 (EKMFRFFIRR…VFLAIAVDNL (245 aa)) is one II repeat. A helical transmembrane segment spans residues 483–501 (SFYWVVLCVVALNTLCVAM). Residues 502 to 511 (VHYNQPRRLT) are Extracellular-facing. A helical transmembrane segment spans residues 512–534 (TTLYFAEFVFLGLFLTEMSLKMY). The Cytoplasmic segment spans residues 535–544 (GLGPRSYFRS). Position 544 (Ser544) interacts with a 1,2-diacyl-sn-glycero-3-phospho-(1D-myo-inositol-4,5-bisphosphate). Residues 545 to 566 (SFNCFDFGVIVGSVFEVVWAAI) traverse the membrane as a helical segment. The Extracellular portion of the chain corresponds to 567–573 (KPGSSFG). A helical membrane pass occupies residues 574 to 586 (ISVLRALRLLRIF). Residues Arg584 and Lys587 each coordinate a 1,2-diacyl-sn-glycero-3-phospho-(1D-myo-inositol-4,5-bisphosphate). The Cytoplasmic segment spans residues 587–604 (KVTKYWSSLRNLVVSLLN). Residues 605–630 (SMKSIISLLFLLFLFIVVFALLGMQL) form a helical membrane-spanning segment. The Extracellular segment spans residues 631–682 (FGGQFNFQDETPTTNFDTFPAAILTVFQILTGEDWNAVMYHGIESQGGVSKG). The helical transmembrane segment at 683–709 (MFSSFYFIVLTLFGNYTLLNVFLAIAV) threads the bilayer. Topologically, residues 710–1151 (DNLANAQELT…FCHYIVTMRY (442 aa)) are cytoplasmic. 3 positions are modified to phosphoserine: Ser745, Ser748, and Ser783. 4 stretches are compositionally biased toward basic and acidic residues: residues 816-826 (PLVVELGRDGA), 857-886 (KDKT…EERP), 922-932 (GSPEEAAEREP), and 965-976 (GPREAESGEEPA). 2 disordered regions span residues 816–1038 (PLVV…VTVG) and 1054–1076 (QPED…DPNT). Residues 977–986 (RRHRARHKAQ) are compositionally biased toward basic residues. A compositionally biased stretch (basic and acidic residues) spans 990–1029 (EAVEKETTEKEATEKEAEIVEADKEKELRNHQPREPHCDL). Position 1069 is a phosphoserine (Ser1069). Residues 1137-1419 (NLLRRFCHYI…IFVALIIITF (283 aa)) form an III repeat. Residues 1152-1170 (FEVVILVVIALSSIALAAE) traverse the membrane as a helical segment. Residues 1171–1178 (DPVRTDSP) are Extracellular-facing. The helical transmembrane segment at 1179 to 1203 (RNNALKYLDYIFTGVFTFEMVIKMI) threads the bilayer. At 1204-1217 (DLGLLLHPGAYFRD) the chain is on the cytoplasmic side. The helical transmembrane segment at 1218–1238 (LWNILDFIVVSGALVAFAFSG) threads the bilayer. The Extracellular segment spans residues 1239–1244 (SKGKDI). Residues 1245–1265 (NTIKSLRVLRVLRPLKTIKRL) traverse the membrane as a helical segment. The Cytoplasmic segment spans residues 1266–1283 (PKLKAVFDCVVNSLKNVL). Residues 1284–1303 (NILIVYMLFMFIFAVIAVQL) traverse the membrane as a helical segment. Topologically, residues 1304-1390 (FKGKFFYCTD…EQGPSPGYRM (87 aa)) are extracellular. The chain crosses the membrane as a helical span at residues 1391 to 1416 (ELSIFYVVYFVVFPFFFVNIFVALII). Residues 1417–1471 (ITFQEQGDKVMSECSLEKNERACIDFAISAKPLTRYMPQNRQSFQYKTWTFVVSP) are Cytoplasmic-facing. An IV repeat occupies 1456–1711 (NRQSFQYKTW…LFVAVIMDNF (256 aa)). A helical transmembrane segment spans residues 1472–1490 (PFEYFIMAMIALNTVVLMM). The Extracellular portion of the chain corresponds to 1491-1498 (KFYDAPYE). Residues 1499–1523 (YELMLKCLNIVFTSMFSMECVLKII) traverse the membrane as a helical segment. Over 1524–1533 (AFGVLNYFRD) the chain is Cytoplasmic. A helical membrane pass occupies residues 1534 to 1555 (AWNVFDFVTVLGSITDILVTEI). The Extracellular segment spans residues 1556–1563 (AETNNFIN). Asn1563 is a glycosylation site (N-linked (GlcNAc...) asparagine). Residues 1564 to 1582 (LSFLRLFRAARLIKLLRQG) traverse the membrane as a helical segment. The Cytoplasmic portion of the chain corresponds to 1583–1601 (YTIRILLWTFVQSFKALPY). The helical transmembrane segment at 1602–1621 (VCLLIAMLFFIYAIIGMQVF) threads the bilayer. At 1622–1683 (GNIALDDDTS…ANATECGSDF (62 aa)) the chain is on the extracellular side. Asn1675 carries an N-linked (GlcNAc...) asparagine glycan. A helical membrane pass occupies residues 1684-1707 (AYFYFVSFIFLCSFLMLNLFVAVI). The Cytoplasmic segment spans residues 1708–2339 (MDNFEYLTRD…YHHPDQDHWC (632 aa)). In terms of domain architecture, EF-hand spans 1724 to 1759 (HHLDEFIRVWAEYDPAACGRISYNDMFEMLKHMSPP). Ca(2+)-binding residues include Asp1737, Arg1743, and Asp1748. Positions 1916–1931 (SSTSLSNGGAIQNQES) are enriched in polar residues. 2 disordered regions span residues 1916–1968 (SSTS…VGRS) and 1981–2206 (TRRG…YKTA). The span at 1946-1960 (DAPHEARPPLERGHS) shows a compositional bias: basic and acidic residues. The segment covering 2049-2063 (SHHHHHRCHRRRDRK) has biased composition (basic residues). Ser2066 is modified (phosphoserine). Residues 2098-2116 (CRRERERRQERGRSQERRQ) are compositionally biased toward basic and acidic residues. Residues 2143–2153 (PSLSSHPTSPT) show a composition bias toward low complexity. The segment covering 2164-2180 (GSGSVNGSPLLSTSGAS) has biased composition (polar residues). Ser2224, Ser2233, and Ser2256 each carry phosphoserine.

Belongs to the calcium channel alpha-1 subunit (TC 1.A.1.11) family. CACNA1B subfamily. Multisubunit complex consisting of alpha-1, alpha-2, beta and delta subunits in a 1:1:1:1 ratio. The channel activity is directed by the pore-forming and voltage-sensitive alpha-1 subunit. In many cases, this subunit is sufficient to generate voltage-sensitive calcium channel activity. The auxiliary subunits beta and alpha-2/delta linked by a disulfide bridge regulate the channel activity. Interacts with RIMS1. Interacts with FMR1 (via C-terminus); this interaction induces a decrease in the number of presynaptic functional CACNA1B channels at the cell surface. Post-translationally, phosphorylated in vitro by CaM-kinase II, PKA, PKC and CGPK. In terms of tissue distribution, isoform Alpha-1b-1 and isoform Alpha-1b-2 are expressed in the central nervous system, but not in skeletal muscle or aorta. Expressed in the cerebral white matter, cortex, hippocampus, basal ganglia, and cerebellum.

It is found in the membrane. The enzyme catalyses Ca(2+)(in) = Ca(2+)(out). Its activity is regulated as follows. Is specifically blocked by omega-conotoxin GVIA. Is specifically blocked by omega-conotoxin MVIIA (ziconotide). Is insensitive to dihydropyridines (DHP). Is specifically blocked by omega-conotoxin MVIIA (ziconotide). Is insensitive to dihydropyridines (DHP). Its function is as follows. Voltage-sensitive calcium channels (VSCC) mediate the entry of calcium ions into excitable cells and are also involved in a variety of calcium-dependent processes, including muscle contraction, hormone or neurotransmitter release, gene expression, cell motility, cell division and cell death. This alpha-1B subunit gives rise to N-type calcium currents. N-type calcium channels belong to the 'high-voltage activated' (HVA) group. They are involved in pain signaling. Calcium channels containing alpha-1B subunit may play a role in directed migration of immature neurons. Mediates Ca(2+) release probability at hippocampal neuronal soma and synaptic terminals. In terms of biological role, voltage-sensitive calcium channels (VSCC) mediate the entry of calcium ions into excitable cells and are also involved in a variety of calcium-dependent processes, including muscle contraction, hormone or neurotransmitter release, gene expression, cell motility, cell division and cell death. This alpha-1B subunit gives rise to N-type calcium currents. This chain is Voltage-dependent N-type calcium channel subunit alpha-1B (CACNA1B), found in Homo sapiens (Human).